Reading from the N-terminus, the 173-residue chain is Protein tyrosine phosphatase type IVA 3 (173 aa).

The Tyrosine-protein phosphatase domain occupies 8-161 (APVEVSYRHM…YRPKQRLRFK (154 aa)). Cysteine 49 and cysteine 104 are oxidised to a cystine. Aspartate 72 (proton donor) is an active-site residue. Cysteine 104 serves as the catalytic Phosphocysteine intermediate. Arginine 110 lines the substrate pocket. At cysteine 170 the chain carries Cysteine methyl ester. The S-farnesyl cysteine moiety is linked to residue cysteine 170. A propeptide spans 171 to 173 (CVM) (removed in mature form).

The protein belongs to the protein-tyrosine phosphatase family. As to quaternary structure, interacts with tubulin. Farnesylated. Farnesylation is required for membrane targeting. Unfarnesylated forms are shifted into the nucleus. In terms of tissue distribution, present in the small intestine, where it is located in the differentiated epithelial cells of the villus but not in the proliferating crypt cells (at protein level). Expressed in heart and skeletal muscle, and at lower levels in lung, spleen and testis.

Its subcellular location is the cell membrane. It is found in the early endosome. It catalyses the reaction O-phospho-L-tyrosyl-[protein] + H2O = L-tyrosyl-[protein] + phosphate. Its activity is regulated as follows. Inhibited by sodium orthovanadate and peroxovanadium compounds, and by pentamidine. Its function is as follows. Protein tyrosine phosphatase which stimulates progression from G1 into S phase during mitosis. Enhances cell proliferation, cell motility and invasive activity, and promotes cancer metastasis. May be involved in the progression of cardiac hypertrophy by inhibiting intracellular calcium mobilization in response to angiotensin II. This chain is Protein tyrosine phosphatase type IVA 3 (Ptp4a3), found in Mus musculus (Mouse).